We begin with the raw amino-acid sequence, 326 residues long: Cyclin-dependent kinase 1 (326 aa).

The 291-residue stretch at 16–306 folds into the Protein kinase domain; sequence FTKLEKIGEG…SKKALHHPYF (291 aa). Residues 22 to 30 and lysine 45 contribute to the ATP site; that span reads IGEGTYGVV. The active-site Proton acceptor is aspartate 140.

It belongs to the protein kinase superfamily. CMGC Ser/Thr protein kinase family. CDC2/CDKX subfamily. As to quaternary structure, forms a stable but non-covalent complex with a regulatory subunit and with a cyclin. Interacts with cks-1.

The protein localises to the nucleus. Its subcellular location is the cytoplasm. The protein resides in the cytoskeleton. It is found in the microtubule organizing center. It localises to the centrosome. It carries out the reaction L-seryl-[protein] + ATP = O-phospho-L-seryl-[protein] + ADP + H(+). The catalysed reaction is L-threonyl-[protein] + ATP = O-phospho-L-threonyl-[protein] + ADP + H(+). The enzyme catalyses [DNA-directed RNA polymerase] + ATP = phospho-[DNA-directed RNA polymerase] + ADP + H(+). Phosphorylation both activates and inactivates the enzyme depending on the site of phosphorylation. Plays a key role in the control of the eukaryotic cell cycle. Required for entry into S-phase and mitosis. Acts as a component of the kinase complex that phosphorylates the repetitive C-terminus of RNA polymerase II. May function in concert with npp-16 to arrest prophase blastomeres in response to anoxia. The chain is Cyclin-dependent kinase 1 from Caenorhabditis briggsae.